A 193-amino-acid chain; its full sequence is Homeobox protein HD-12 (193 aa).

A DNA-binding region (homeobox; TALE-type) is located at residues 123-185 (SVIRRINFPK…NARRRILPFM (63 aa)).

The protein belongs to the TALE/KNOX homeobox family.

The protein resides in the nucleus. In Encephalitozoon cuniculi (strain GB-M1) (Microsporidian parasite), this protein is Homeobox protein HD-12 (HD-12).